The sequence spans 95 residues: Aspartyl/glutamyl-tRNA(Asn/Gln) amidotransferase subunit C (95 aa).

This sequence belongs to the GatC family. In terms of assembly, heterotrimer of A, B and C subunits.

The catalysed reaction is L-glutamyl-tRNA(Gln) + L-glutamine + ATP + H2O = L-glutaminyl-tRNA(Gln) + L-glutamate + ADP + phosphate + H(+). The enzyme catalyses L-aspartyl-tRNA(Asn) + L-glutamine + ATP + H2O = L-asparaginyl-tRNA(Asn) + L-glutamate + ADP + phosphate + 2 H(+). Functionally, allows the formation of correctly charged Asn-tRNA(Asn) or Gln-tRNA(Gln) through the transamidation of misacylated Asp-tRNA(Asn) or Glu-tRNA(Gln) in organisms which lack either or both of asparaginyl-tRNA or glutaminyl-tRNA synthetases. The reaction takes place in the presence of glutamine and ATP through an activated phospho-Asp-tRNA(Asn) or phospho-Glu-tRNA(Gln). In Cereibacter sphaeroides (strain ATCC 17025 / ATH 2.4.3) (Rhodobacter sphaeroides), this protein is Aspartyl/glutamyl-tRNA(Asn/Gln) amidotransferase subunit C.